A 237-amino-acid polypeptide reads, in one-letter code: MVAERYTVDLNKPLVFQVGHLGEEYQEWIHQPIVCVEGPRFFESDFWEFLTRTVWWAIPTIWLPVVCYVLSISASKGLTFPQIGLIVAFGVLTWTLLEYTLHRFLFHIQTKSYWANTAHYLLHGCHHKHPQDGLRLVFPPTATAILLVPLWKLLHLLATPATAPAILGGILFGYVMYDITHYYLHHGQPKEPTFKHLKKYHLNHHFRIQDKGYGITSSLWDKVFGTLPGIKAAAKKS.

A run of 2 helical transmembrane segments spans residues 54-74 (VWWA…SISA) and 77-97 (GLTF…WTLL). The Zn(2+) site is built by histidine 102, histidine 107, histidine 123, histidine 126, and histidine 127. The next 2 membrane-spanning stretches (helical) occupy residues 134–154 (LRLV…WKLL) and 156–176 (LLAT…GYVM). 5 residues coordinate Zn(2+): histidine 181, histidine 185, histidine 201, histidine 204, and histidine 205.

Belongs to the sterol desaturase family. In terms of assembly, interacts with CYTB5-A, CYTB5-B, CYTB5-C and CYTB5-D. Zn(2+) is required as a cofactor. Expressed in leaves, roots, flowers and seeds.

The protein resides in the endoplasmic reticulum membrane. It catalyses the reaction an N-(1,2-saturated acyl)sphinganine + 2 Fe(II)-[cytochrome b5] + O2 + 2 H(+) = an N-[(2'R)-hydroxyacyl]sphinganine + 2 Fe(III)-[cytochrome b5] + H2O. Its function is as follows. Fatty acid 2-hydroxylase involved in the alpha-hydroxylation of the long-chain fatty acid (LCFA) palmitic acid. Probably involved in the resistance response to oxidative stress. The protein is Dihydroceramide fatty acyl 2-hydroxylase FAH2 of Arabidopsis thaliana (Mouse-ear cress).